Consider the following 354-residue polypeptide: Thymidylate synthase (354 aa).

Residues 1–32 (MPAAGSEPSRPPSPPGVQEQSAEPRPPPPPHG) are disordered. Residue arginine 53 coordinates dUMP. Serine 117 carries the post-translational modification Phosphoserine. 178 to 179 (RR) is a dUMP binding site. Cysteine 198 functions as the Nucleophile in the catalytic mechanism. DUMP is bound by residues 218 to 221 (RSGD), asparagine 229, and 259 to 261 (HIY). Position 221 (aspartate 221) interacts with (6R)-5,10-methylene-5,6,7,8-tetrahydrofolate. Lysine 349 participates in a covalent cross-link: Glycyl lysine isopeptide (Lys-Gly) (interchain with G-Cter in SUMO2). Alanine 353 contributes to the (6R)-5,10-methylene-5,6,7,8-tetrahydrofolate binding site.

Belongs to the thymidylate synthase family. In terms of assembly, homodimer.

It is found in the nucleus. Its subcellular location is the cytoplasm. It localises to the mitochondrion. The protein resides in the mitochondrion matrix. The protein localises to the mitochondrion inner membrane. The enzyme catalyses dUMP + (6R)-5,10-methylene-5,6,7,8-tetrahydrofolate = 7,8-dihydrofolate + dTMP. It participates in pyrimidine metabolism; dTTP biosynthesis. Its function is as follows. Catalyzes the reductive methylation of 2'-deoxyuridine 5'-monophosphate (dUMP) to thymidine 5'-monophosphate (dTMP), using the cosubstrate, 5,10- methylenetetrahydrofolate (CH2H4folate) as a 1-carbon donor and reductant and contributes to the de novo mitochondrial thymidylate biosynthesis pathway. The polypeptide is Thymidylate synthase (TYMS) (Bos taurus (Bovine)).